The sequence spans 381 residues: Sulfite reductase, dissimilatory-type subunit beta (381 aa).

Residues Cys-151, Cys-188, Cys-189, Cys-193, Cys-231, Cys-258, Cys-261, and Cys-264 each coordinate [4Fe-4S] cluster. Cys-193 contributes to the siroheme binding site. The 28-residue stretch at 249 to 276 (NTIAIKNERCMYCGNCYTMCPALPISDG) folds into the 4Fe-4S ferredoxin-type domain.

In terms of assembly, heterohexamer of two alpha, two beta and two gamma subunits. It depends on [4Fe-4S] cluster as a cofactor. The cofactor is siroheme.

The enzyme catalyses [DsrC protein]-trisulfide + NAD(+) + 3 H2O = [DsrC protein]-dithiol + sulfite + NADH + 3 H(+). Functionally, catalyzes the reduction of sulfite to sulfide. This is the terminal oxidation reaction in sulfate respiration, a process catalyzed by the sulfate-reducing bacteria. The polypeptide is Sulfite reductase, dissimilatory-type subunit beta (dsvB) (Nitratidesulfovibrio vulgaris (strain ATCC 29579 / DSM 644 / CCUG 34227 / NCIMB 8303 / VKM B-1760 / Hildenborough) (Desulfovibrio vulgaris)).